The chain runs to 406 residues: Argininosuccinate synthase (406 aa).

ATP is bound by residues 11-19 (AYSGGLDTS) and alanine 38. L-citrulline-binding residues include tyrosine 91 and serine 96. Residue glycine 121 participates in ATP binding. Residues threonine 123, asparagine 127, and aspartate 128 each contribute to the L-aspartate site. Residue asparagine 127 participates in L-citrulline binding. Positions 131, 182, 191, 267, and 279 each coordinate L-citrulline.

Belongs to the argininosuccinate synthase family. Type 1 subfamily. As to quaternary structure, homotetramer.

Its subcellular location is the cytoplasm. It carries out the reaction L-citrulline + L-aspartate + ATP = 2-(N(omega)-L-arginino)succinate + AMP + diphosphate + H(+). Its pathway is amino-acid biosynthesis; L-arginine biosynthesis; L-arginine from L-ornithine and carbamoyl phosphate: step 2/3. The protein is Argininosuccinate synthase of Rhodospirillum centenum (strain ATCC 51521 / SW).